The chain runs to 328 residues: MKLTVLGAGAWGTALAASWASQHAVTLWGRNARDVDTMRASRVNTHYLPGCPLPSSLALSADFDRALEAAELIVIAVPSSGLRATLAALARRPALPPILWVCKGFEPGTRRLPHQLVAELLPAGAETGVLSGPSFAQEVAHGYPTALTLASADIALAQRLAEALSGNRLRLYAHDDVVGVEIGGALKNVMAIAAGICDGLNFGHNARAALITRGLAEMTRLGVDSGGRFETFMGLSGLGDLILTTTGDLSRNRQVGLRVAKGQPLDRILDELGHVAEGVTTAREVAALAAERGVEMPIARMVCRILFEGLPASEAVDSLLNREIRSEF.

3 residues coordinate NADPH: Trp11, Arg30, and Lys103. Sn-glycerol 3-phosphate contacts are provided by Lys103, Gly132, and Ser134. Residue Ala136 coordinates NADPH. Sn-glycerol 3-phosphate-binding residues include Lys187, Asp240, Ser250, Arg251, and Asn252. Lys187 (proton acceptor) is an active-site residue. Arg251 serves as a coordination point for NADPH. Residues Val275 and Glu277 each contribute to the NADPH site.

This sequence belongs to the NAD-dependent glycerol-3-phosphate dehydrogenase family.

It localises to the cytoplasm. The catalysed reaction is sn-glycerol 3-phosphate + NAD(+) = dihydroxyacetone phosphate + NADH + H(+). The enzyme catalyses sn-glycerol 3-phosphate + NADP(+) = dihydroxyacetone phosphate + NADPH + H(+). It participates in membrane lipid metabolism; glycerophospholipid metabolism. Its function is as follows. Catalyzes the reduction of the glycolytic intermediate dihydroxyacetone phosphate (DHAP) to sn-glycerol 3-phosphate (G3P), the key precursor for phospholipid synthesis. The chain is Glycerol-3-phosphate dehydrogenase [NAD(P)+] from Thiobacillus denitrificans (strain ATCC 25259 / T1).